Reading from the N-terminus, the 68-residue chain is Protein SlyX homolog (68 aa).

It belongs to the SlyX family.

The protein is Protein SlyX homolog of Pseudomonas fluorescens (strain Pf0-1).